Reading from the N-terminus, the 331-residue chain is Sucrose operon repressor (331 aa).

Residues 1-56 (MASLKDVARLAGVSMMTVSRVMHNAESVRPATRDRVLQAIQTLNYVPDLSARKMRA) enclose the HTH lacI-type domain. The segment at residues 4 to 23 (LKDVARLAGVSMMTVSRVMH) is a DNA-binding region (H-T-H motif).

Functionally, repressor for the csc operon. Binds D-fructose as an inducer. The sequence is that of Sucrose operon repressor (cscR) from Escherichia coli.